Reading from the N-terminus, the 256-residue chain is 5'-nucleotidase SurE (256 aa).

4 residues coordinate a divalent metal cation: Asp8, Asp9, Ser40, and Asn94.

It belongs to the SurE nucleotidase family. It depends on a divalent metal cation as a cofactor.

It is found in the cytoplasm. It carries out the reaction a ribonucleoside 5'-phosphate + H2O = a ribonucleoside + phosphate. Nucleotidase that shows phosphatase activity on nucleoside 5'-monophosphates. The sequence is that of 5'-nucleotidase SurE from Wolbachia pipientis subsp. Culex pipiens (strain wPip).